Here is a 33-residue protein sequence, read N- to C-terminus: Brevinin-2Rh (33 aa).

Cysteine 27 and cysteine 33 are disulfide-bonded.

As to expression, expressed by the skin glands.

The protein resides in the secreted. Its function is as follows. Antimicrobial peptide. This chain is Brevinin-2Rh, found in Pelophylax ridibundus (Marsh frog).